A 950-amino-acid polypeptide reads, in one-letter code: General transcription factor II-I repeat domain-containing protein 2 (950 aa).

GTF2I-like repeat units follow at residues 100-194 and 324-418; these read QVDS…QPGG and LSSL…SNVG.

The protein belongs to the TFII-I family.

The protein resides in the nucleus. The sequence is that of General transcription factor II-I repeat domain-containing protein 2 (GTF2IRD2) from Bos taurus (Bovine).